Reading from the N-terminus, the 338-residue chain is Biotin synthase (338 aa).

In terms of domain architecture, Radical SAM core spans 63 to 290 (NGVQLSTLLS…RAKVRLSAGR (228 aa)). 3 residues coordinate [4Fe-4S] cluster: Cys78, Cys82, and Cys85. Residues Cys122, Cys153, Cys213, and Arg285 each coordinate [2Fe-2S] cluster.

This sequence belongs to the radical SAM superfamily. Biotin synthase family. Homodimer. [4Fe-4S] cluster is required as a cofactor. [2Fe-2S] cluster serves as cofactor.

It catalyses the reaction (4R,5S)-dethiobiotin + (sulfur carrier)-SH + 2 reduced [2Fe-2S]-[ferredoxin] + 2 S-adenosyl-L-methionine = (sulfur carrier)-H + biotin + 2 5'-deoxyadenosine + 2 L-methionine + 2 oxidized [2Fe-2S]-[ferredoxin]. It functions in the pathway cofactor biosynthesis; biotin biosynthesis; biotin from 7,8-diaminononanoate: step 2/2. Its function is as follows. Catalyzes the conversion of dethiobiotin (DTB) to biotin by the insertion of a sulfur atom into dethiobiotin via a radical-based mechanism. This Nitrosomonas eutropha (strain DSM 101675 / C91 / Nm57) protein is Biotin synthase.